A 373-amino-acid polypeptide reads, in one-letter code: Glutamate 5-kinase (373 aa).

Lysine 15 is a binding site for ATP. Positions 55, 142, and 154 each coordinate substrate. Residues 174–175 and 216–222 contribute to the ATP site; these read TD and TGGMATK. The 79-residue stretch at 281–359 folds into the PUA domain; the sequence is AGSIVVDAGA…SEIERILGFR (79 aa).

The protein belongs to the glutamate 5-kinase family.

The protein resides in the cytoplasm. It carries out the reaction L-glutamate + ATP = L-glutamyl 5-phosphate + ADP. It participates in amino-acid biosynthesis; L-proline biosynthesis; L-glutamate 5-semialdehyde from L-glutamate: step 1/2. Catalyzes the transfer of a phosphate group to glutamate to form L-glutamate 5-phosphate. The protein is Glutamate 5-kinase of Geobacter sp. (strain M21).